Reading from the N-terminus, the 214-residue chain is 2-phospho-L-lactate guanylyltransferase (214 aa).

The protein belongs to the CofC family. As to quaternary structure, homodimer.

The catalysed reaction is (2S)-2-phospholactate + GTP + H(+) = (2S)-lactyl-2-diphospho-5'-guanosine + diphosphate. Its pathway is cofactor biosynthesis; coenzyme F420 biosynthesis. Guanylyltransferase that catalyzes the activation of (2S)-2-phospholactate (2-PL) as (2S)-lactyl-2-diphospho-5'-guanosine, via the condensation of 2-PL with GTP. It is involved in the biosynthesis of coenzyme F420, a hydride carrier cofactor. This Methanoregula boonei (strain DSM 21154 / JCM 14090 / 6A8) protein is 2-phospho-L-lactate guanylyltransferase.